The primary structure comprises 502 residues: MSELRDTRLEKAQALIECGQVPYALRFEPSHRTAELQQAHADLPNGEERDVSVAIAGRVMTRRVMGKLAFFTLADETGPIQLFLEKAALGDAFKQITSLVDAGDWIGVKGTLRRTDRGELSVKAAQWQMLSKSLQPLPDKWHGLADVEKRYRQRYLDLIVSPDTRDTFRRRAQLVSGIRRWLDERDFLEIETPVLQSEPGGADARPFETHHNALDLPLTLRIATELHLKRLVVGGFERVYELGRIFRNEGVSTRHNPEFTSVEIYQAFADYNDMMDLTEELISSVTQQVCGSTLINYQGTEINLAPGWRRATMHELVKEATGLDFAGFSSREDAAAAMEAKGLQTPALADSVGRLLNEAFEQAVEETLIQPTFVTDYPVEISPLARSHRSKPGLVERFELFIVGREHGNAFSELTDPVDQRQRLEAQQERRAAGDLEAQRVDEDFLNALEVGMPPTGGLGIGIDRLVMLLTDSPSIRDVIAFPLLKPESRDGSAAVDNGSTE.

Mg(2+)-binding residues include E399 and E406.

It belongs to the class-II aminoacyl-tRNA synthetase family. As to quaternary structure, homodimer. Mg(2+) is required as a cofactor.

The protein resides in the cytoplasm. The enzyme catalyses tRNA(Lys) + L-lysine + ATP = L-lysyl-tRNA(Lys) + AMP + diphosphate. This Synechococcus sp. (strain RCC307) protein is Lysine--tRNA ligase.